Here is a 179-residue protein sequence, read N- to C-terminus: MKKNMILFFGILKKLLICILKMEIKCWLTSDIVYFDSELALTVKQFFMKKNNTILDKIAAHCYGLIMQKISQPVTFKNYIYIWRAVLFADCTIKTNKTPDTQNIINLSQNATEEVKIIIDELIDCFKNKNNFKEEEYKPNLDLLNSYIKNIKKFITENKTSKFIFDKDWEILINNIWMN.

Positions 1-26 (MKKNMILFFGILKKLLICILKMEIKC) are cleaved as a signal peptide.

This is an uncharacterized protein from Acheta domesticus (House cricket).